The following is a 281-amino-acid chain: MKSVNTIHEVKNIVKDWKKQGLSVGLVPTMGYLHEGHGSLILKARENSKVVVSIFVNPMQFGPTEDLEKYPRDLEKDLKYCEELGADLIFSPEPGEMYPEGFCTSVDMSVLTEELCGLSRPSHFKGVCTIVNKLLNIVNPDRAYFGEKDAQQLVIVKRMVRDLNMDIEIVGCPIIREKDGLAKSSRNTYLNSEERRAALVLSKSIFTGKDMVKKGCRETDVLLKKMKAIIDQEPLARIDYLKAVDTMTMQQVDTIDRPVLIAMAVYIGNVRLIDNFSFIPD.

Met-30 to His-37 is a binding site for ATP. His-37 serves as the catalytic Proton donor. Position 60 (Gln-60) interacts with (R)-pantoate. Gln-60 serves as a coordination point for beta-alanine. Residue Gly-146–Asp-149 participates in ATP binding. Gln-152 provides a ligand contact to (R)-pantoate. Residues Ile-175 and Lys-183–Arg-186 contribute to the ATP site.

This sequence belongs to the pantothenate synthetase family. In terms of assembly, homodimer.

Its subcellular location is the cytoplasm. It carries out the reaction (R)-pantoate + beta-alanine + ATP = (R)-pantothenate + AMP + diphosphate + H(+). It functions in the pathway cofactor biosynthesis; (R)-pantothenate biosynthesis; (R)-pantothenate from (R)-pantoate and beta-alanine: step 1/1. In terms of biological role, catalyzes the condensation of pantoate with beta-alanine in an ATP-dependent reaction via a pantoyl-adenylate intermediate. In Ruminiclostridium cellulolyticum (strain ATCC 35319 / DSM 5812 / JCM 6584 / H10) (Clostridium cellulolyticum), this protein is Pantothenate synthetase.